The chain runs to 392 residues: Stilbene synthase 6 (392 aa).

55 to 58 (KFNR) is a binding site for substrate. C164 is a catalytic residue. Residues L267 and 305–307 (GGP) contribute to the substrate site.

The protein belongs to the thiolase-like superfamily. Chalcone/stilbene synthases family. As to quaternary structure, homodimer.

It is found in the cytoplasm. The catalysed reaction is 4-coumaroyl-CoA + 3 malonyl-CoA + 3 H(+) = trans-resveratrol + 4 CO2 + 4 CoA. It functions in the pathway phytoalexin biosynthesis; 3,4',5-trihydroxystilbene biosynthesis; 3,4',5-trihydroxystilbene from trans-4-coumarate: step 2/2. Mediates resistance to pathogens which are sensitive to stilbenes. This is Stilbene synthase 6 (STS) from Vitis vinifera (Grape).